A 290-amino-acid chain; its full sequence is Sodium/potassium-transporting ATPase subunit beta-2 (290 aa).

Residues 1-39 (MVIQKEKKSCGQVVEEWKEFVWNPRTHQFMGRTGTSWAF) lie on the Cytoplasmic side of the membrane. A helical; Signal-anchor for type II membrane protein transmembrane segment spans residues 40–67 (ILLFYLVFYGFLTAMFTLTMWVMLQTVS). The Extracellular segment spans residues 68 to 290 (DHTPKYQDRL…VAFKLRINKT (223 aa)). 2 N-linked (GlcNAc...) asparagine glycosylation sites follow: N96 and N118. C129 and C150 are disulfide-bonded. N-linked (GlcNAc...) asparagine glycosylation is found at N153 and N159. C160 and C177 form a disulfide bridge. 3 N-linked (GlcNAc...) asparagine glycosylation sites follow: N193, N197, and N238. An immunoglobulin-like region spans residues 193 to 290 (NQSMNVTCAG…VAFKLRINKT (98 aa)). C200 and C261 form a disulfide bridge.

The protein belongs to the X(+)/potassium ATPases subunit beta family. The sodium/potassium-transporting ATPase is composed of a catalytic alpha subunit, an auxiliary non-catalytic beta subunit and an additional regulatory subunit. Interacts with isoform 2 of BSG.

The protein resides in the cell membrane. This is the non-catalytic component of the active enzyme, which catalyzes the hydrolysis of ATP coupled with the exchange of Na(+) and K(+) ions across the plasma membrane. The exact function of the beta-2 subunit is not known. In terms of biological role, mediates cell adhesion of neurons and astrocytes, and promotes neurite outgrowth. This Homo sapiens (Human) protein is Sodium/potassium-transporting ATPase subunit beta-2 (ATP1B2).